Consider the following 359-residue polypeptide: Nicotinate-nucleotide--dimethylbenzimidazole phosphoribosyltransferase (359 aa).

E318 functions as the Proton acceptor in the catalytic mechanism.

This sequence belongs to the CobT family. As to quaternary structure, homodimer.

It catalyses the reaction 5,6-dimethylbenzimidazole + nicotinate beta-D-ribonucleotide = alpha-ribazole 5'-phosphate + nicotinate + H(+). It participates in nucleoside biosynthesis; alpha-ribazole biosynthesis; alpha-ribazole from 5,6-dimethylbenzimidazole: step 1/2. Its function is as follows. Catalyzes the synthesis of alpha-ribazole-5'-phosphate from nicotinate mononucleotide (NAMN) and 5,6-dimethylbenzimidazole (DMB). This chain is Nicotinate-nucleotide--dimethylbenzimidazole phosphoribosyltransferase, found in Escherichia coli (strain ATCC 8739 / DSM 1576 / NBRC 3972 / NCIMB 8545 / WDCM 00012 / Crooks).